Here is a 482-residue protein sequence, read N- to C-terminus: G patch domain-containing protein 2-like (482 aa).

3 positions are modified to phosphoserine: Ser31, Ser86, and Ser88. Thr91 carries the phosphothreonine modification. Disordered stretches follow at residues 195 to 222 and 408 to 482; these read SQPGRKERMECEAEEQKHGSDENMSECD and KRKR…TNGC. Over residues 198 to 215 the composition is skewed to basic and acidic residues; the sequence is GRKERMECEAEEQKHGSD. Residues 414-427 show a composition bias toward low complexity; sequence VASASFSSPSPVHP. Residues 468–482 are compositionally biased toward polar residues; it reads EKNSGCSSSPGTNGC.

In Mus musculus (Mouse), this protein is G patch domain-containing protein 2-like (Gpatch2l).